We begin with the raw amino-acid sequence, 2235 residues long: Bridge-like lipid transfer protein family member 2 (2235 aa).

The N-terminal stretch at 1–31 (MPLFFSALLVLLLVALSALFLGRWLVVRLAT) is a signal peptide. The tract at residues 29–108 (LATKWCQRKL…LQKVSDLSAP (80 aa)) is transmembrane domain. Residue S563 is modified to Phosphoserine. Residue N730 is glycosylated (N-linked (GlcNAc...) asparagine). The disordered stretch occupies residues 1495-1529 (PQMPAKKPKRGVPTSASAPPRVNTPSFSGQPDKGS). The stretch at 1813-1885 (SILHLQEAVR…LNILIRCFKD (73 aa)) forms a coiled coil. S1846, S2090, and S2094 each carry phosphoserine. The segment at 2074-2099 (GKGVAQGLTRSSGVRRSFRKSPEHPV) is disordered.

Belongs to the SABRE family. As to expression, expressed in pancreas, placenta and up-regulated in breast carcinoma epithelial cells, ductal in situ carcinoma (DCIS), invasive breast carcinoma (IBC) and metastatic breast carcinoma cells (MET).

It localises to the cell membrane. The protein localises to the endoplasmic reticulum membrane. The protein resides in the mitochondrion membrane. Functionally, tube-forming lipid transport protein which binds to phosphatidylinositols and affects phosphatidylinositol-4,5-bisphosphate (PtdIns-4,5-P2) distribution. The protein is Bridge-like lipid transfer protein family member 2 of Homo sapiens (Human).